Reading from the N-terminus, the 441-residue chain is Actin-related protein 4 (441 aa).

The disordered stretch occupies residues 48–73 (VDVDSTKTNSNSEDSKTESEKEKSKR). Basic and acidic residues predominate over residues 60–70 (EDSKTESEKEK).

It belongs to the actin family. ARP4 subfamily. As to quaternary structure, component of the SWR1 chromatin-remodeling complex and of the NuA4 histone acetyltransferase complex. Interacts with the SWI/SNF complex. Interacts with EAF1A and EAF1B. In terms of tissue distribution, mostly expressed in flowers, and, to a lower extent, in roots, seedlings, leaves and siliques (at protein level).

The protein localises to the nucleus. It localises to the cytoplasm. In terms of biological role, involved in several developmental processes including organization of plant organs, flowering time, anther development, flower senescence and fertility, probably by regulating the chromatin structure. The protein is Actin-related protein 4 of Arabidopsis thaliana (Mouse-ear cress).